Here is a 164-residue protein sequence, read N- to C-terminus: B-phycoerythrin alpha chain (164 aa).

2 residues coordinate (2R,3E)-phycoerythrobilin: C82 and C139.

This sequence belongs to the phycobiliprotein family. Heteromer of 6 alpha, 6 beta and one gamma chain. Post-translationally, contains two covalently linked bilin chromophores.

Its subcellular location is the plastid. It localises to the chloroplast thylakoid membrane. Light-harvesting photosynthetic bile pigment-protein from the phycobiliprotein complex. The protein is B-phycoerythrin alpha chain (cpeA) of Porphyridium sordidum (Red alga).